We begin with the raw amino-acid sequence, 268 residues long: GTP cyclohydrolase FolE2 (268 aa).

Belongs to the GTP cyclohydrolase IV family.

It carries out the reaction GTP + H2O = 7,8-dihydroneopterin 3'-triphosphate + formate + H(+). It functions in the pathway cofactor biosynthesis; 7,8-dihydroneopterin triphosphate biosynthesis; 7,8-dihydroneopterin triphosphate from GTP: step 1/1. Functionally, converts GTP to 7,8-dihydroneopterin triphosphate. This Ralstonia nicotianae (strain ATCC BAA-1114 / GMI1000) (Ralstonia solanacearum) protein is GTP cyclohydrolase FolE2.